A 113-amino-acid chain; its full sequence is Hydrogenase maturation factor HypA (113 aa).

Histidine 2 provides a ligand contact to Ni(2+). Positions 73, 76, 89, and 92 each coordinate Zn(2+).

It belongs to the HypA/HybF family.

Involved in the maturation of [NiFe] hydrogenases. Required for nickel insertion into the metal center of the hydrogenase. The sequence is that of Hydrogenase maturation factor HypA from Aeromonas hydrophila subsp. hydrophila (strain ATCC 7966 / DSM 30187 / BCRC 13018 / CCUG 14551 / JCM 1027 / KCTC 2358 / NCIMB 9240 / NCTC 8049).